The following is a 236-amino-acid chain: N-alpha-acetyltransferase 40 (236 aa).

A lipid anchor (N-myristoyl glycine) is attached at Gly-2. One can recognise an N-acetyltransferase domain in the interval 63-217; that stretch reads SDLDQKTIDW…DCTYEILSKR (155 aa). Substrate-binding positions include Tyr-85, 127 to 129, and Tyr-138; that span reads DVE. Acetyl-CoA is bound by residues 140–142 and 148–153; these read VQL and RKGVGK. Thr-174 contacts substrate. Residue Asn-179 coordinates acetyl-CoA. Tyr-211 is a binding site for substrate.

The protein belongs to the acetyltransferase family. NAA40 subfamily.

Its subcellular location is the cytoplasm. It is found in the nucleus. It carries out the reaction N-terminal L-seryl-[histone H4] + acetyl-CoA = N-terminal N(alpha)-acetyl-L-seryl-[histone H4] + CoA + H(+). The enzyme catalyses N-terminal L-seryl-[histone H2A] + acetyl-CoA = N-terminal N(alpha)-acetyl-L-seryl-[histone H2A] + CoA + H(+). Functionally, N-alpha-acetyltransferase that specifically mediates the acetylation of the N-terminal residues of histones H4 and H2A. In contrast to other N-alpha-acetyltransferase, has a very specific selectivity for histones H4 and H2A N-terminus and specifically recognizes the 'Ser-Gly-Arg-Gly sequence'. This Xenopus laevis (African clawed frog) protein is N-alpha-acetyltransferase 40 (naa40).